A 320-amino-acid polypeptide reads, in one-letter code: Putative thiosulfate sulfurtransferase 2 (320 aa).

Rhodanese domains lie at 18–125 (HAPK…PLSS) and 154–267 (AINV…HACP). C233 serves as the catalytic Cysteine persulfide intermediate. Position 238 (R238) interacts with substrate.

It carries out the reaction thiosulfate + hydrogen cyanide = thiocyanate + sulfite + 2 H(+). May be a sulfotransferase involved in the formation of thiosulfate. The protein is Putative thiosulfate sulfurtransferase 2 (cysA2) of Mycobacterium bovis (strain ATCC BAA-935 / AF2122/97).